The chain runs to 130 residues: Sigma-w pathway protein YsdB (130 aa).

A helical membrane pass occupies residues Phe-2–Val-22.

Its subcellular location is the membrane. Its function is as follows. May mediate a negative feedback loop that down-regulates the expression of the sigma-W regulon following the activation of sigma-W in response to conditions of cell envelope stress. Might interact with and inhibit the activity of the protease PrsW, or could bind to the anti-sigma-W factor RsiW and thereby protect it from PrsW-mediated cleavage. This is Sigma-w pathway protein YsdB (ysdB) from Bacillus subtilis (strain 168).